The chain runs to 218 residues: Putative transposase InsD for insertion element IS2E (218 aa).

Positions 23–206 (KPAVPPSKRA…SPREYLRQRA (184 aa)) constitute an Integrase catalytic domain.

Functionally, involved in the transposition of the insertion sequence IS2. This chain is Putative transposase InsD for insertion element IS2E (insD8), found in Escherichia coli (strain K12).